The chain runs to 152 residues: UPF0225 protein YchJ (152 aa).

This sequence belongs to the UPF0225 family.

This Escherichia coli O139:H28 (strain E24377A / ETEC) protein is UPF0225 protein YchJ.